The primary structure comprises 222 residues: GTP cyclohydrolase 1 (222 aa).

Residues cysteine 111, histidine 114, and cysteine 182 each coordinate Zn(2+).

This sequence belongs to the GTP cyclohydrolase I family. Homomer.

The catalysed reaction is GTP + H2O = 7,8-dihydroneopterin 3'-triphosphate + formate + H(+). It functions in the pathway cofactor biosynthesis; 7,8-dihydroneopterin triphosphate biosynthesis; 7,8-dihydroneopterin triphosphate from GTP: step 1/1. This Shigella boydii serotype 18 (strain CDC 3083-94 / BS512) protein is GTP cyclohydrolase 1.